The primary structure comprises 314 residues: MEFSMNATVEQLAPVEQQATAGWVVAALYQFKEVQDPADLQQRLLDLVKTINLCGTLIVAGEGINGTVAGDREAIDTIHQFLLNEGFNAMEYKESHSSDKPFRKMKIKLKKEIVTLGVEVKPRDLVGHYLDPKEWNELIARDDVILIDTRNDYEYKAGTFKGAIDPKTETFREFPEYVKKELEQHKDKKIAMFCTGGIRCEKSTSLLLQEGFKEVYHLKGGILKYLEETPPDESLWEGECFVFDGRTAVTHGVEEGANIKCHACGWPLTPEESALPSYEHGVSCLYCIDKTTEKQKAGFRMRQSQIAAAKRKRL.

Residues 140-234 enclose the Rhodanese domain; the sequence is ARDDVILIDT…YLEETPPDES (95 aa). C194 acts as the Cysteine persulfide intermediate in catalysis.

Belongs to the TrhO family.

The enzyme catalyses uridine(34) in tRNA + AH2 + O2 = 5-hydroxyuridine(34) in tRNA + A + H2O. Its function is as follows. Catalyzes oxygen-dependent 5-hydroxyuridine (ho5U) modification at position 34 in tRNAs. This is tRNA uridine(34) hydroxylase from Acinetobacter baumannii (strain AYE).